The primary structure comprises 642 residues: Threonine--tRNA ligase (642 aa).

The TGS domain occupies 1-61; that stretch reads MPVITLPDGS…ETDSDLSIIT (61 aa). The interval 243 to 534 is catalytic; the sequence is DHRKIGKQLD…LIEEYAGKFP (292 aa). Residues C334, H385, and H511 each contribute to the Zn(2+) site.

This sequence belongs to the class-II aminoacyl-tRNA synthetase family. As to quaternary structure, homodimer. Zn(2+) serves as cofactor.

The protein localises to the cytoplasm. The enzyme catalyses tRNA(Thr) + L-threonine + ATP = L-threonyl-tRNA(Thr) + AMP + diphosphate + H(+). Catalyzes the attachment of threonine to tRNA(Thr) in a two-step reaction: L-threonine is first activated by ATP to form Thr-AMP and then transferred to the acceptor end of tRNA(Thr). Also edits incorrectly charged L-seryl-tRNA(Thr). The sequence is that of Threonine--tRNA ligase from Shewanella pealeana (strain ATCC 700345 / ANG-SQ1).